The following is a 3563-amino-acid chain: D-lysergyl-peptide-synthetase subunit 1 (3563 aa).

The tract at residues 307–706 (SCSPRPNPQA…LGRKDDQVKI (400 aa)) is adenylation (A) domain 1. The Carrier 1 domain maps to 844 to 921 (EPKSDREKLL…EIVIVSTSAT (78 aa)). The residue at position 881 (serine 881) is an O-(pantetheine 4'-phosphoryl)serine. The interval 963-1354 (EDIYPCTHLQ…EHILTEIHSN (392 aa)) is condensation (C) domain 1. Positions 1397–1804 (QEKCQAQPDA…RRKDAQVKIR (408 aa)) are adenylation (A) domain 2. Residues 1944–2020 (PPSNATEHEI…KLALARGVTQ (77 aa)) form the Carrier 2 domain. Serine 1981 is subject to O-(pantetheine 4'-phosphoryl)serine. Residues 2067–2486 (ERIYPCSPIQ…ALPVLDEDQM (420 aa)) are condensation (C) domain 2. Positions 2511–2909 (QCIRCPDSPS…GRNDDQVKVR (399 aa)) are adenylation (A) domain 3. A Carrier 3 domain is found at 3025 to 3104 (PPRTALEAEL…RFGSYRRAGA (80 aa)). Serine 3064 is modified (O-(pantetheine 4'-phosphoryl)serine). The cyclization (Cyc) domain stretch occupies residues 3166–3451 (LYFSKPMASE…VAKSTTWSSD (286 aa)).

Belongs to the NRP synthetase family.

Its pathway is alkaloid biosynthesis; ergot alkaloid biosynthesis. D-lysergyl-peptide-synthetase subunit 1; part of the gene cluster that mediates the biosynthesis of fungal ergot alkaloid. DmaW catalyzes the first step of ergot alkaloid biosynthesis by condensing dimethylallyl diphosphate (DMAP) and tryptophan to form 4-dimethylallyl-L-tryptophan. The second step is catalyzed by the methyltransferase easF that methylates 4-dimethylallyl-L-tryptophan in the presence of S-adenosyl-L-methionine, resulting in the formation of 4-dimethylallyl-L-abrine. The catalase easC and the FAD-dependent oxidoreductase easE then transform 4-dimethylallyl-L-abrine to chanoclavine-I which is further oxidized by easD in the presence of NAD(+), resulting in the formation of chanoclavine-I aldehyde. Agroclavine dehydrogenase easG then mediates the conversion of chanoclavine-I aldehyde to agroclavine via a non-enzymatic adduct reaction: the substrate is an iminium intermediate that is formed spontaneously from chanoclavine-I aldehyde in the presence of glutathione. The presence of easA is not required to complete this reaction. Further conversion of agroclavine to paspalic acid is a two-step process involving oxidation of agroclavine to elymoclavine and of elymoclavine to paspalic acid, the second step being performed by the elymoclavine oxidase cloA. Paspalic acid is then further converted to D-lysergic acid. Ergopeptines are assembled from D-lysergic acid and three different amino acids by the D-lysergyl-peptide-synthetases composed each of a monomudular and a trimodular nonribosomal peptide synthetase subunit. LpsB and lpsC encode the monomodular subunits responsible for D-lysergic acid activation and incorporation into the ergopeptine backbone. LpsA1 and A2 subunits encode the trimodular nonribosomal peptide synthetase assembling the tripeptide portion of ergopeptines. LpsA1 is responsible for formation of the major ergopeptine, ergotamine, and lpsA2 for alpha-ergocryptine, the minor ergopeptine of the total alkaloid mixture elaborated by C.purpurea. D-lysergyl-tripeptides are assembled by the nonribosomal peptide synthetases and released as N-(D-lysergyl-aminoacyl)-lactams. Cyclolization of the D-lysergyl-tripeptides is performed by the Fe(2+)/2-ketoglutarate-dependent dioxygenase easH which introduces a hydroxyl group into N-(D-lysergyl-aminoacyl)-lactam at alpha-C of the aminoacyl residue followed by spontaneous condensation with the terminal lactam carbonyl group. This chain is D-lysergyl-peptide-synthetase subunit 1, found in Claviceps purpurea (Ergot fungus).